We begin with the raw amino-acid sequence, 465 residues long: tRNA modification GTPase MnmE (465 aa).

(6S)-5-formyl-5,6,7,8-tetrahydrofolate-binding residues include R21, E85, and K124. Residues 220-387 (GVPVAIIGET…LQQRLVAAAH (168 aa)) enclose the TrmE-type G domain. A K(+)-binding site is contributed by N230. GTP is bound by residues 230-235 (NAGKST), 249-255 (SDIHGTT), and 274-277 (DTAG). Residue S234 coordinates Mg(2+). Residues S249, I251, and T254 each coordinate K(+). T255 contacts Mg(2+). K465 is a binding site for (6S)-5-formyl-5,6,7,8-tetrahydrofolate.

This sequence belongs to the TRAFAC class TrmE-Era-EngA-EngB-Septin-like GTPase superfamily. TrmE GTPase family. As to quaternary structure, homodimer. Heterotetramer of two MnmE and two MnmG subunits. K(+) serves as cofactor.

It localises to the cytoplasm. Functionally, exhibits a very high intrinsic GTPase hydrolysis rate. Involved in the addition of a carboxymethylaminomethyl (cmnm) group at the wobble position (U34) of certain tRNAs, forming tRNA-cmnm(5)s(2)U34. The sequence is that of tRNA modification GTPase MnmE from Bacteroides fragilis (strain ATCC 25285 / DSM 2151 / CCUG 4856 / JCM 11019 / LMG 10263 / NCTC 9343 / Onslow / VPI 2553 / EN-2).